A 479-amino-acid polypeptide reads, in one-letter code: Anaerobic nitric oxide reductase flavorubredoxin (479 aa).

The interval 30-210 (LRGSSYNSYL…PFSRLVTPKI (181 aa)) is zinc metallo-hydrolase. His79, Glu81, Asp83, His147, Asp166, and His227 together coordinate Fe cation. The 140-residue stretch at 254-393 (ITIFYDTMSN…LCREHGREIA (140 aa)) folds into the Flavodoxin-like domain. Residues 260 to 264 (TMSNN) and 342 to 369 (AFGS…EMSL) each bind FMN. A Rubredoxin-like domain is found at 423–474 (GPRMQCSVCQWIYDPAKGEPMQDVAPGTPWSEVPDNFLCPECSLGKDVFDEL). Fe cation contacts are provided by Cys428, Cys431, Cys461, and Cys464.

The protein in the N-terminal section; belongs to the zinc metallo-hydrolase group 3 family. In terms of assembly, homotetramer. The cofactor is Fe cation. FMN is required as a cofactor.

It is found in the cytoplasm. Its pathway is nitrogen metabolism; nitric oxide reduction. In terms of biological role, anaerobic nitric oxide reductase; uses NADH to detoxify nitric oxide (NO), protecting several 4Fe-4S NO-sensitive enzymes. Has at least 2 reductase partners, only one of which (NorW, flavorubredoxin reductase) has been identified. NO probably binds to the di-iron center; electrons enter from the NorW at rubredoxin and are transferred sequentially to the FMN center and the di-iron center. Also able to function as an aerobic oxygen reductase. This chain is Anaerobic nitric oxide reductase flavorubredoxin, found in Escherichia coli (strain SMS-3-5 / SECEC).